A 362-amino-acid polypeptide reads, in one-letter code: Meiotic recombination protein SPO11-1 (362 aa).

One can recognise a Topo IIA-type catalytic domain in the interval 8–142 (SESTNLLQRI…LNVVSVGNGL (135 aa)). The active-site O-(5'-phospho-DNA)-tyrosine intermediate is the Tyr-103. Residues Glu-189 and Asp-241 each coordinate Mg(2+).

The protein belongs to the TOP6A family. Heterotetramer of 2 SPO11 (SPO11-1 and/or SPO11-2) and 2 MTOPVIB chains. Interacts with MTOPVIB. May form a heterodimer with SPO11-2. Interacts with PRD1. Does not interact with TOP6B. Mg(2+) serves as cofactor. Expressed in shoots, young seedlings, flowers and reproductive tissues. Not found in roots or rosette leaves.

The protein localises to the nucleus. It carries out the reaction ATP-dependent breakage, passage and rejoining of double-stranded DNA.. In terms of biological role, component of a topoisomerase 6 complex specifically required for meiotic recombination. Together with MTOPVIB, mediates DNA cleavage that forms the double-strand breaks (DSB) that initiate meiotic recombination. The complex promotes relaxation of negative and positive supercoiled DNA and DNA decatenation through cleavage and ligation cycles. This chain is Meiotic recombination protein SPO11-1, found in Arabidopsis thaliana (Mouse-ear cress).